A 478-amino-acid chain; its full sequence is Subtilisin-like protease 3 (478 aa).

Residues 1–17 form the signal peptide; that stretch reads MKFSTILPILWANCCLC. An Inhibitor I9 domain is found at 70-167; it reads RYVIVFNEDI…FVEQETTVKI (98 aa). One can recognise a Peptidase S8 domain in the interval 177 to 478; sequence PWGLHRVSHR…GGGKKLDGFW (302 aa). Active-site charge relay system residues include Asp213, His245, and Ser407.

It belongs to the peptidase S8 family.

Its function is as follows. Serine protease with unknown substrate. The sequence is that of Subtilisin-like protease 3 (YSP3) from Saccharomyces cerevisiae (strain ATCC 204508 / S288c) (Baker's yeast).